The following is a 1026-amino-acid chain: Leucine-rich repeat and coiled-coil domain-containing protein 1 (1026 aa).

LRR repeat units lie at residues 39–60, 61–82, 83–104, 105–126, and 131–152; these read SIHAINLHCNNISKISSIDHIW, NLRHLDLSSNQISQIEGLNTLT, KLCTLNLSCNLITRVEGLEALV, NLTKLNLSYNHINDLSGLMPLH, and KLRYIDLHSNYIDSIHHLLQCT. Residues 170–212 form the LRRCT domain; sequence NPICLIPGYRAIILQTLPQLRILDCKNIFGEPVSLEEINSSHL. A disordered region spans residues 310 to 338; the sequence is DNVPEKDLRPKRDTDITSESDYGNRRECS. Residues 312-324 are compositionally biased toward basic and acidic residues; the sequence is VPEKDLRPKRDTD. Positions 428 to 641 form a coiled coil; it reads REMRWKAEQT…DLENEFRIAL (214 aa).

The protein belongs to the LRRCC1 family.

It localises to the cytoplasm. It is found in the cytoskeleton. The protein resides in the microtubule organizing center. Its subcellular location is the centrosome. The protein localises to the centriole. Required for the organization of the mitotic spindle. Maintains the structural integrity of centrosomes during mitosis. The sequence is that of Leucine-rich repeat and coiled-coil domain-containing protein 1 (Lrrcc1) from Mus musculus (Mouse).